A 256-amino-acid polypeptide reads, in one-letter code: Pimeloyl-[acyl-carrier protein] methyl ester esterase (256 aa).

The AB hydrolase-1 domain maps to 15–242 (HLVLLHGWGL…AAHAPFISHP (228 aa)). Substrate is bound by residues Trp-22, 82 to 83 (SL), and 143 to 147 (FLALQ). Residue Ser-82 is the Nucleophile of the active site. Catalysis depends on residues Asp-207 and His-235. Residue His-235 coordinates substrate.

It belongs to the AB hydrolase superfamily. Carboxylesterase BioH family. In terms of assembly, monomer.

It localises to the cytoplasm. It carries out the reaction 6-carboxyhexanoyl-[ACP] methyl ester + H2O = 6-carboxyhexanoyl-[ACP] + methanol + H(+). The protein operates within cofactor biosynthesis; biotin biosynthesis. Functionally, the physiological role of BioH is to remove the methyl group introduced by BioC when the pimeloyl moiety is complete. It allows to synthesize pimeloyl-ACP via the fatty acid synthetic pathway through the hydrolysis of the ester bonds of pimeloyl-ACP esters. In Escherichia coli O6:H1 (strain CFT073 / ATCC 700928 / UPEC), this protein is Pimeloyl-[acyl-carrier protein] methyl ester esterase.